The sequence spans 152 residues: Putative pre-16S rRNA nuclease (152 aa).

Belongs to the YqgF nuclease family.

It is found in the cytoplasm. Its function is as follows. Could be a nuclease involved in processing of the 5'-end of pre-16S rRNA. This chain is Putative pre-16S rRNA nuclease, found in Bifidobacterium longum (strain DJO10A).